The chain runs to 615 residues: Afadin- and alpha-actinin-binding protein (615 aa).

Coiled-coil stretches lie at residues 126-227 (KLGS…IAMD) and 266-293 (RQKQ…SLLS). 4 positions are modified to phosphoserine: serine 290, serine 293, serine 313, and serine 319. Residues 293–316 (SPQKKKPRERAEDGTGTVAISDIE) form a disordered region. The stretch at 375–461 (ISRQDHEQET…RSFTEAAIRL (87 aa)) forms a coiled coil. Phosphoserine occurs at positions 537, 541, and 543. Residues 567 to 615 (PEESKPSEVARESTDQKWSVQSRPSSREGCYSGCSSAFRSAHGDRDDLP) form a disordered region. The span at 568-581 (EESKPSEVARESTD) shows a compositional bias: basic and acidic residues.

This sequence belongs to the ADIP family. As to quaternary structure, interacts with SSX2 and SSX3. Does not interact with SSX1 and SSX4. Interacts with afadin and alpha-actinin. Interacts with VAV2. Interacts with PCM1. Interacts with WRAP73. In terms of tissue distribution, widely expressed.

The protein resides in the cell junction. The protein localises to the adherens junction. Its subcellular location is the nucleus. It localises to the cytoplasm. It is found in the cytoskeleton. The protein resides in the microtubule organizing center. The protein localises to the centrosome. Its subcellular location is the centriolar satellite. It localises to the cilium basal body. Belongs to an adhesion system, which plays a role in the organization of homotypic, interneuronal and heterotypic cell-cell adherens junctions (AJs). May connect the nectin-afadin and E-cadherin-catenin system through alpha-actinin and may be involved in organization of the actin cytoskeleton at AJs through afadin and alpha-actinin. Acts as a centrosome maturation factor, probably by maintaining the integrity of the pericentriolar material and proper microtubule nucleation at mitotic spindle poles. The function seems to implicate at least in part WRAP73; the SSX2IP:WRAP73 complex is proposed to act as regulator of spindle anchoring at the mitotic centrosome. Involved in cell movement: localizes at the leading edge of moving cells in response to PDGF and is required for the formation of the leading edge and the promotion of cell movement, possibly via activation of Rac signaling. Involved in ciliogenesis. It is required for targeted recruitment of the BBSome, CEP290, RAB8, and SSTR3 to the cilia. This Mus musculus (Mouse) protein is Afadin- and alpha-actinin-binding protein (Ssx2ip).